The sequence spans 535 residues: Ankyrin repeat domain-containing protein 34C (535 aa).

4 ANK repeats span residues threonine 10–glutamate 39, lysine 43–isoleucine 80, serine 84–leucine 114, and threonine 118–lysine 147. Disordered stretches follow at residues serine 159 to serine 181 and alanine 214 to serine 237. Residues histidine 216–alanine 225 show a composition bias toward polar residues. Serine 301 is subject to Phosphoserine. The interval aspartate 381–arginine 444 is disordered. The residue at position 447 (serine 447) is a Phosphoserine.

Belongs to the ANKRD34 family.

This chain is Ankyrin repeat domain-containing protein 34C (ANKRD34C), found in Homo sapiens (Human).